The sequence spans 258 residues: Type III pantothenate kinase (258 aa).

Residue 6–13 (DVGNTNTV) participates in ATP binding. Substrate is bound by residues Tyr-100 and 107 to 110 (GADR). The active-site Proton acceptor is Asp-109. A K(+)-binding site is contributed by Asp-129. Position 132 (Thr-132) interacts with ATP. Residue Thr-184 participates in substrate binding.

It belongs to the type III pantothenate kinase family. Homodimer. The cofactor is NH4(+). K(+) serves as cofactor.

Its subcellular location is the cytoplasm. The catalysed reaction is (R)-pantothenate + ATP = (R)-4'-phosphopantothenate + ADP + H(+). It functions in the pathway cofactor biosynthesis; coenzyme A biosynthesis; CoA from (R)-pantothenate: step 1/5. Catalyzes the phosphorylation of pantothenate (Pan), the first step in CoA biosynthesis. This Geobacillus sp. (strain WCH70) protein is Type III pantothenate kinase.